We begin with the raw amino-acid sequence, 273 residues long: Formamidopyrimidine-DNA glycosylase (273 aa).

Pro2 serves as the catalytic Schiff-base intermediate with DNA. Residue Glu3 is the Proton donor of the active site. The active-site Proton donor; for beta-elimination activity is Lys58. His91, Arg110, and Arg153 together coordinate DNA. The segment at 238–272 (KVYGKEGQPCPRCGEDFVKIKICGRGTTYCLHCQK) adopts an FPG-type zinc-finger fold. The Proton donor; for delta-elimination activity role is filled by Arg262.

It belongs to the FPG family. As to quaternary structure, monomer. Requires Zn(2+) as cofactor.

The enzyme catalyses Hydrolysis of DNA containing ring-opened 7-methylguanine residues, releasing 2,6-diamino-4-hydroxy-5-(N-methyl)formamidopyrimidine.. It carries out the reaction 2'-deoxyribonucleotide-(2'-deoxyribose 5'-phosphate)-2'-deoxyribonucleotide-DNA = a 3'-end 2'-deoxyribonucleotide-(2,3-dehydro-2,3-deoxyribose 5'-phosphate)-DNA + a 5'-end 5'-phospho-2'-deoxyribonucleoside-DNA + H(+). Its function is as follows. Involved in base excision repair of DNA damaged by oxidation or by mutagenic agents. Acts as a DNA glycosylase that recognizes and removes damaged bases. Has a preference for oxidized purines, such as 7,8-dihydro-8-oxoguanine (8-oxoG). Has AP (apurinic/apyrimidinic) lyase activity and introduces nicks in the DNA strand. Cleaves the DNA backbone by beta-delta elimination to generate a single-strand break at the site of the removed base with both 3'- and 5'-phosphates. The sequence is that of Formamidopyrimidine-DNA glycosylase from Lactobacillus delbrueckii subsp. bulgaricus (strain ATCC BAA-365 / Lb-18).